A 505-amino-acid chain; its full sequence is ATP synthase subunit alpha (505 aa).

170 to 177 (GDRQTGKT) is an ATP binding site.

The protein belongs to the ATPase alpha/beta chains family. F-type ATPases have 2 components, CF(1) - the catalytic core - and CF(0) - the membrane proton channel. CF(1) has five subunits: alpha(3), beta(3), gamma(1), delta(1), epsilon(1). CF(0) has four main subunits: a(1), b(1), b'(1) and c(9-12).

It is found in the cellular thylakoid membrane. It catalyses the reaction ATP + H2O + 4 H(+)(in) = ADP + phosphate + 5 H(+)(out). Functionally, produces ATP from ADP in the presence of a proton gradient across the membrane. The alpha chain is a regulatory subunit. The sequence is that of ATP synthase subunit alpha from Synechococcus sp. (strain RCC307).